We begin with the raw amino-acid sequence, 363 residues long: Phosphoserine aminotransferase (363 aa).

Residue Arg-42 coordinates L-glutamate. Pyridoxal 5'-phosphate is bound by residues 76–77 (GR), Trp-102, Thr-156, Asp-175, and Gln-198. At Lys-199 the chain carries N6-(pyridoxal phosphate)lysine. 240-241 (NT) contacts pyridoxal 5'-phosphate.

Belongs to the class-V pyridoxal-phosphate-dependent aminotransferase family. SerC subfamily. In terms of assembly, homodimer. It depends on pyridoxal 5'-phosphate as a cofactor.

It is found in the cytoplasm. It catalyses the reaction O-phospho-L-serine + 2-oxoglutarate = 3-phosphooxypyruvate + L-glutamate. The enzyme catalyses 4-(phosphooxy)-L-threonine + 2-oxoglutarate = (R)-3-hydroxy-2-oxo-4-phosphooxybutanoate + L-glutamate. It participates in amino-acid biosynthesis; L-serine biosynthesis; L-serine from 3-phospho-D-glycerate: step 2/3. It functions in the pathway cofactor biosynthesis; pyridoxine 5'-phosphate biosynthesis; pyridoxine 5'-phosphate from D-erythrose 4-phosphate: step 3/5. In terms of biological role, catalyzes the reversible conversion of 3-phosphohydroxypyruvate to phosphoserine and of 3-hydroxy-2-oxo-4-phosphonooxybutanoate to phosphohydroxythreonine. This chain is Phosphoserine aminotransferase, found in Shewanella baltica (strain OS223).